The sequence spans 431 residues: Trigger factor (431 aa).

In terms of domain architecture, PPIase FKBP-type spans 158–243 (GDLVAVETWS…VAEVSEPVVP (86 aa)).

The protein belongs to the FKBP-type PPIase family. Tig subfamily.

It is found in the cytoplasm. The enzyme catalyses [protein]-peptidylproline (omega=180) = [protein]-peptidylproline (omega=0). Its function is as follows. Involved in protein export. Acts as a chaperone by maintaining the newly synthesized protein in an open conformation. Functions as a peptidyl-prolyl cis-trans isomerase. The sequence is that of Trigger factor from Stenotrophomonas maltophilia (strain K279a).